Reading from the N-terminus, the 469-residue chain is Tetratricopeptide repeat protein 38 (469 aa).

Ala2 carries the post-translational modification N-acetylalanine. Phosphoserine is present on Ser5. TPR repeat units follow at residues 108–141 (REQL…HPTD), 180–213 (SYVK…NPTD), and 252–285 (CHNY…SLQA).

This sequence belongs to the TTC38 family.

The protein is Tetratricopeptide repeat protein 38 (TTC38) of Pongo abelii (Sumatran orangutan).